The following is a 185-amino-acid chain: uncharacterized protein (185 aa).

The 139-residue stretch at 39–177 (LWHASAGVLV…SWPFVPDSRA (139 aa)) folds into the Nudix hydrolase domain. Residues 77 to 99 (GGVVDPGETPQETAIREVGEELG) carry the Nudix box motif. Mg(2+) is bound by residues Glu-93 and Glu-97.

This sequence belongs to the Nudix hydrolase family. The cofactor is Mg(2+).

This is an uncharacterized protein from Rhodococcus erythropolis (Arthrobacter picolinophilus).